Reading from the N-terminus, the 704-residue chain is Elongation factor G (704 aa).

Positions 8-291 (DRVRNIGIMA…AVIDYLASPV (284 aa)) constitute a tr-type G domain. GTP is bound by residues 17–24 (AHIDAGKT), 90–94 (DTPGH), and 144–147 (NKMD).

This sequence belongs to the TRAFAC class translation factor GTPase superfamily. Classic translation factor GTPase family. EF-G/EF-2 subfamily.

The protein resides in the cytoplasm. Functionally, catalyzes the GTP-dependent ribosomal translocation step during translation elongation. During this step, the ribosome changes from the pre-translocational (PRE) to the post-translocational (POST) state as the newly formed A-site-bound peptidyl-tRNA and P-site-bound deacylated tRNA move to the P and E sites, respectively. Catalyzes the coordinated movement of the two tRNA molecules, the mRNA and conformational changes in the ribosome. This chain is Elongation factor G, found in Chlorobaculum tepidum (strain ATCC 49652 / DSM 12025 / NBRC 103806 / TLS) (Chlorobium tepidum).